The following is a 424-amino-acid chain: Histidine--tRNA ligase (424 aa).

The protein belongs to the class-II aminoacyl-tRNA synthetase family. Homodimer.

Its subcellular location is the cytoplasm. It catalyses the reaction tRNA(His) + L-histidine + ATP = L-histidyl-tRNA(His) + AMP + diphosphate + H(+). This Salmonella paratyphi B (strain ATCC BAA-1250 / SPB7) protein is Histidine--tRNA ligase.